Here is a 549-residue protein sequence, read N- to C-terminus: MSEHVLPAEGPMRFISPIIQDNPTGWGPYEMPDQFRDMPYQPFSKGDRLGKISDWTMVQDKKYQNKYASQFGAGSSYAYFHDEDESTFHLVDTTRVQKPYQSYQRGRARGQRGRGARGARTPGGMTTLNKPRERKLGKRWGQRGAPMKIRDASVTVRPTWVTIEDMDFPRLAKLSLPGIKEGEDIVSCGTLEYYDKAYDRVNVKHEKPLQRIDRIFHTVTTTDDPVIRRLSKTAGTVYATDAILATIMCCTRSNYSWDIVIEKIGDKLFLHKRDNTEFDLLTVNETSVEPPADDGNSINSPRNLALEATFINHNFSQQVLKSGPTEPKYKFQEPNPFVSEQEDGEVASVGYRYRKWILNNGVVLIARCEHDAVMQGPQGETQFLTIKALNEWDSKLANGVEWRQKLDTQRGAVLANELRNNSCKLAKWTVQALLAGSDQIKFGYVSRAQVRDNSRHVILGTQQFKPHEFAAQINLSMDNAWGILRCIIDICMKQKDGKYLIMKDPNKPLIRLYDIPDNTFESDASEESGDEQADTPFAPLYSYGNSKRV.

The tract at residues 101-130 (QSYQRGRARGQRGRGARGARTPGGMTTLNK) is disordered. Over residues 106–117 (GRARGQRGRGAR) the composition is skewed to basic residues. The segment at 277-291 (EFDLLTVNETSVEPP) is RNA gate. The segment at 521–549 (ESDASEESGDEQADTPFAPLYSYGNSKRV) is disordered. The segment covering 523–533 (DASEESGDEQA) has biased composition (acidic residues).

Belongs to the eIF-3 subunit D family. In terms of assembly, component of the eukaryotic translation initiation factor 3 (eIF-3) complex.

Its subcellular location is the cytoplasm. MRNA cap-binding component of the eukaryotic translation initiation factor 3 (eIF-3) complex, which is involved in protein synthesis of a specialized repertoire of mRNAs and, together with other initiation factors, stimulates binding of mRNA and methionyl-tRNAi to the 40S ribosome. The eIF-3 complex specifically targets and initiates translation of a subset of mRNAs involved in cell proliferation. In the eIF-3 complex, eif3d specifically recognizes and binds the 7-methylguanosine cap of a subset of mRNAs. The sequence is that of Eukaryotic translation initiation factor 3 subunit D from Bombyx mori (Silk moth).